We begin with the raw amino-acid sequence, 137 residues long: MSAALLRRGLELLGAPEAPGAAPGHTKPSQAPMKRTRKAKATQAQKLRNSAKGKVPKSALAEFRKKERRGYLGVNLRFMTSARSTVDESVTRQIMRQNRGRKACDRPVTKTKKKKKAEGTVFTEEDFQKFQREYFGS.

Arg7 bears the Citrulline mark. The span at 14-24 (GAPEAPGAAPG) shows a compositional bias: low complexity. The tract at residues 14–58 (GAPEAPGAAPGHTKPSQAPMKRTRKAKATQAQKLRNSAKGKVPKS) is disordered. Ser84 carries the post-translational modification Phosphoserine. The interval 96–120 (RQNRGRKACDRPVTKTKKKKKAEGT) is disordered.

It belongs to the AROS family. As to quaternary structure, part of the small subunit (SSU) processome, composed of more than 70 proteins and the RNA chaperone small nucleolar RNA (snoRNA) U3. Interacts with RPS19; the interaction is direct and mediates the integration of RPS19 in state post-A1. Interacts with SIRT1. Citrullinated by PADI4.

It is found in the nucleus. It localises to the nucleolus. In terms of biological role, part of the small subunit (SSU) processome, first precursor of the small eukaryotic ribosomal subunit. During the assembly of the SSU processome in the nucleolus, many ribosome biogenesis factors, an RNA chaperone and ribosomal proteins associate with the nascent pre-rRNA and work in concert to generate RNA folding, modifications, rearrangements and cleavage as well as targeted degradation of pre-ribosomal RNA by the RNA exosome. Acts as a chaperone that specifically mediates the integration of RPS19 in state post-A1. Direct regulator of SIRT1. Enhances SIRT1-mediated deacetylation of p53/TP53, thereby participating in inhibition of p53/TP53-mediated transcriptional activity. The protein is Active regulator of SIRT1 (RPS19BP1) of Bos taurus (Bovine).